Reading from the N-terminus, the 944-residue chain is Isoleucine--tRNA ligase (944 aa).

The 'HIGH' region signature appears at 58–68 (PYANGSIHIGH). Residue Glu563 coordinates L-isoleucyl-5'-AMP. The short motif at 604 to 608 (KMSKS) is the 'KMSKS' region element. Residue Lys607 coordinates ATP. Zn(2+) contacts are provided by Cys907, Cys910, Cys927, and Cys930.

It belongs to the class-I aminoacyl-tRNA synthetase family. IleS type 1 subfamily. Monomer. It depends on Zn(2+) as a cofactor.

The protein resides in the cytoplasm. It catalyses the reaction tRNA(Ile) + L-isoleucine + ATP = L-isoleucyl-tRNA(Ile) + AMP + diphosphate. Catalyzes the attachment of isoleucine to tRNA(Ile). As IleRS can inadvertently accommodate and process structurally similar amino acids such as valine, to avoid such errors it has two additional distinct tRNA(Ile)-dependent editing activities. One activity is designated as 'pretransfer' editing and involves the hydrolysis of activated Val-AMP. The other activity is designated 'posttransfer' editing and involves deacylation of mischarged Val-tRNA(Ile). This Salmonella paratyphi A (strain ATCC 9150 / SARB42) protein is Isoleucine--tRNA ligase.